Reading from the N-terminus, the 364-residue chain is Protein L-Myc (364 aa).

3 disordered regions span residues 41–81, 111–172, and 219–285; these read TSPP…HSKG, DRLA…EIDV, and PPES…KRKN. Residues 228–245 show a composition bias toward basic and acidic residues; it reads ASERGPQEEVLERDAAGE. A bHLH domain is found at 281–333; the sequence is TKRKNHNFLERKRRNDLRSRFLALRDQVPTLASCSKAPKVVILSKALEYLQAL. A leucine-zipper region spans residues 333–361; sequence LVGAEKRMATEKRQLRCRQQQLQKRIAYL.

In terms of assembly, efficient DNA binding requires dimerization with another bHLH protein. Binds DNA as a heterodimer with MAX.

It localises to the nucleus. The protein is Protein L-Myc (MYCL) of Homo sapiens (Human).